The chain runs to 396 residues: S-adenosylmethionine synthase (396 aa).

His15 serves as a coordination point for ATP. Asp17 contacts Mg(2+). Glu43 lines the K(+) pocket. Positions 56 and 99 each coordinate L-methionine. The flexible loop stretch occupies residues 99–109 (QSSDIAQGVDR). ATP is bound by residues 175–177 (DGK), 241–242 (RF), Asp250, 256–257 (RK), Ser273, and Lys277. L-methionine is bound at residue Asp250. Lys281 contributes to the L-methionine binding site.

The protein belongs to the AdoMet synthase family. Homotetramer; dimer of dimers. Requires Mg(2+) as cofactor. The cofactor is K(+).

The protein localises to the cytoplasm. It carries out the reaction L-methionine + ATP + H2O = S-adenosyl-L-methionine + phosphate + diphosphate. It functions in the pathway amino-acid biosynthesis; S-adenosyl-L-methionine biosynthesis; S-adenosyl-L-methionine from L-methionine: step 1/1. Its function is as follows. Catalyzes the formation of S-adenosylmethionine (AdoMet) from methionine and ATP. The overall synthetic reaction is composed of two sequential steps, AdoMet formation and the subsequent tripolyphosphate hydrolysis which occurs prior to release of AdoMet from the enzyme. The chain is S-adenosylmethionine synthase from Pelotomaculum thermopropionicum (strain DSM 13744 / JCM 10971 / SI).